The following is a 372-amino-acid chain: Alpha-L-fucosidase 3 (372 aa).

Positions Met-1–Ala-23 are cleaved as a signal peptide. Residue Ser-37 is the Nucleophile of the active site. 4 N-linked (GlcNAc...) asparagine glycosylation sites follow: Asn-96, Asn-114, Asn-139, and Asn-182. Catalysis depends on residues Asp-345 and His-348.

This sequence belongs to the 'GDSL' lipolytic enzyme family. As to expression, high expression in younger leaves and in the apical region of the inflorescence stem.

Its subcellular location is the secreted. It is found in the extracellular space. The protein resides in the apoplast. The enzyme catalyses an alpha-L-fucoside + H2O = L-fucose + an alcohol. In terms of biological role, hydrolyzes alpha-1,2-linked fucose. Also active on fucosylated xyloglucan oligosaccharides. The polypeptide is Alpha-L-fucosidase 3 (FXG1) (Arabidopsis thaliana (Mouse-ear cress)).